Reading from the N-terminus, the 114-residue chain is UPF0145 protein STK_10800 (114 aa).

It belongs to the UPF0145 family.

The chain is UPF0145 protein STK_10800 from Sulfurisphaera tokodaii (strain DSM 16993 / JCM 10545 / NBRC 100140 / 7) (Sulfolobus tokodaii).